Reading from the N-terminus, the 396-residue chain is Beta-1,3-N-acetylglucosaminyltransferase radical fringe (396 aa).

The Cytoplasmic segment spans residues 1-6 (MNFSCL). Residues 7–27 (GLSKICFLVSVIFCTFLLLFI) traverse the membrane as a helical; Signal-anchor for type II membrane protein segment. At 28-396 (PKTKTPWRPR…THWCPPRKTR (369 aa)) the chain is on the lumenal side. 2 N-linked (GlcNAc...) asparagine glycosylation sites follow: asparagine 49 and asparagine 120. Residue arginine 145 participates in substrate binding. An N-linked (GlcNAc...) asparagine glycan is attached at asparagine 184. 2 cysteine pairs are disulfide-bonded: cysteine 185/cysteine 196 and cysteine 214/cysteine 277. A substrate-binding site is contributed by aspartate 218. Aspartate 219 serves as a coordination point for Mn(2+). Aspartate 307 is a catalytic residue. Histidine 331 lines the Mn(2+) pocket. Cysteine 381 and cysteine 390 are oxidised to a cystine.

This sequence belongs to the glycosyltransferase 31 family. Mn(2+) serves as cofactor. As to expression, detected in the mesanchymal region of the developing limb. Expressed in mesoderm but not in ectoderm with no evident boundary of expression.

It is found in the golgi apparatus membrane. The catalysed reaction is 3-O-(alpha-L-fucosyl)-L-threonyl-[EGF-like domain protein] + UDP-N-acetyl-alpha-D-glucosamine = 3-O-(N-acetyl-beta-D-glucosaminyl-(1-&gt;3)-alpha-L-fucosyl)-L-threonyl-[EGF-like domain protein] + UDP + H(+). It catalyses the reaction 3-O-(alpha-L-fucosyl)-L-seryl-[EGF-like domain protein] + UDP-N-acetyl-alpha-D-glucosamine = 3-O-(N-acetyl-beta-D-glucosaminyl-(1-&gt;3)-alpha-L-fucosyl)-L-seryl-[EGF-like domain protein] + UDP + H(+). In terms of biological role, glycosyltransferase that initiates the elongation of O-linked fucose residues attached to EGF-like repeats in the extracellular domain of Notch molecules. Involved in forelimb development and in adult forelimb regeneration. This Notophthalmus viridescens (Eastern newt) protein is Beta-1,3-N-acetylglucosaminyltransferase radical fringe (RFNG).